A 421-amino-acid polypeptide reads, in one-letter code: MLPRLWWLVLWLQPLATLPASAVHDEEAAMSVPRCKSLKETDLIKTSVSDCYCYNQHSQIQWTYMWSTVQVTVTSPGLLNIVYITGSHNCQHTESILSFIKCVTHNFWAPEEAEEITIVFSPYGETVCFSVKPVGRLLPYIVSVSRNIVDFKLFLVFVTGIFLFLYAKTLSQSPVFYYSSGTVLGILMTLVFVLLMAKKHIPKYSTFGALMIGCWFASVYVLCQLMEDLKWLWYGNRMYILGYVVVVGLCSFAACYSHGPLADEGSRDLLMWTLRLFSLALVYTGVAAPQFAYAVLIVLLFSWSLHYLLRAFSYLRWKMRPWFTAEPQVARYLTDDEYREQAEAATARALEELRQACCRPDFPSWLAVSRLQAPKKFAEFVLGASHLSPEEVSTHEKQYGLGGAFLEEQLFSLQTDSLPAS.

The first 22 residues, 1 to 22 (MLPRLWWLVLWLQPLATLPASA), serve as a signal peptide directing secretion. 6 consecutive transmembrane segments (helical) span residues 64–84 (YMWS…IVYI), 147–167 (NIVD…FLYA), 175–195 (VFYY…FVLL), 206–226 (TFGA…CQLM), 238–258 (MYIL…CYSH), and 281–301 (LVYT…VLLF).

The protein belongs to the NEMP family. In the ovary, highly expressed in somatic cells.

It is found in the nucleus inner membrane. In Mus musculus (Mouse), this protein is Nuclear envelope integral membrane protein 2 (Nemp2).